We begin with the raw amino-acid sequence, 260 residues long: HTH-type transcriptional repressor NanR (260 aa).

In terms of domain architecture, HTH gntR-type spans 27-95 (KKLSDMVEEE…NGERARVSMP (69 aa)). Residues 55–74 (ERELMEFFNVGRPSVREALA) constitute a DNA-binding region (H-T-H motif).

The protein belongs to the NanR family.

Transcriptional repressor that controls expression of the genes required for the catabolism of sialic acids. This Enterobacter sp. (strain 638) protein is HTH-type transcriptional repressor NanR.